We begin with the raw amino-acid sequence, 177 residues long: Calcineurin subunit B (177 aa).

4 EF-hand domains span residues 25 to 60 (KEIK…AVNP), 62 to 92 (VKRV…FNAQ), 94 to 129 (DKQR…MVGN), and 135 to 170 (QLQQ…QDLE). Ca(2+)-binding residues include D38, D40, N42, T44, E49, D70, N72, D74, S76, E81, D107, D109, D111, Y113, E118, D148, D150, D152, K154, and E159.

This sequence belongs to the calcineurin regulatory subunit family. Composed of a catalytic subunit (A) and a regulatory subunit (B).

In terms of biological role, regulatory subunit of calcineurin, a calcium-dependent, calmodulin stimulated protein phosphatase. Confers calcium sensitivity. The protein is Calcineurin subunit B (CNB1) of Naegleria gruberi (Amoeba).